The following is a 633-amino-acid chain: uncharacterized protein (633 aa).

Residues 12–43 (ESGTNNYSDTIANGNTLPPRSKKGHSGRRKRS) form a disordered region. A compositionally biased stretch (polar residues) spans 13 to 29 (SGTNNYSDTIANGNTLP). Basic residues predominate over residues 31 to 42 (RSKKGHSGRRKR). The next 2 membrane-spanning stretches (helical) occupy residues 99–118 (ILFG…SSAL) and 217–233 (NCAF…ITAC). The segment at 593–612 (DAETNKATGSAKSENIETKS) is disordered.

The protein localises to the membrane. This is an uncharacterized protein from Saccharomyces cerevisiae (strain ATCC 204508 / S288c) (Baker's yeast).